A 350-amino-acid chain; its full sequence is Dauer larva development regulatory growth factor daf-7 (350 aa).

Positions methionine 1 to threonine 21 are cleaved as a signal peptide. The propeptide occupies phenylalanine 22 to arginine 234. A glycan (N-linked (GlcNAc...) asparagine) is linked at asparagine 23. Intrachain disulfides connect cysteine 241–cysteine 251, cysteine 250–cysteine 315, cysteine 278–cysteine 347, and cysteine 282–cysteine 349.

This sequence belongs to the TGF-beta family. In terms of tissue distribution, expressed in the chemosensory neurons, including in the ASJ neurons in males. Expressed in the ASI neurons.

Its subcellular location is the secreted. Under harsh environmental conditions, larvae enter a developmentally arrested state known as dauer; TGF-beta-like daf-7 acts to inhibit dauer larva formation and promote growth. May be a ligand to cell surface receptor daf-4. May act as a negative regulator of dauer larva development by transducing chemosensory information from ASI neurons. Involved in sensitivity to CO2 levels. Involved in mate searching behavior of males, acting in concert with the neuropeptide pdf-1. In AWC neurons, acts to promote expression of srsx-3, a member of the GPCR family. In Caenorhabditis elegans, this protein is Dauer larva development regulatory growth factor daf-7.